We begin with the raw amino-acid sequence, 284 residues long: P2R1A-PPP2R2A-interacting phosphatase regulator 1 (284 aa).

Disordered regions lie at residues 1-32, 112-198, and 235-284; these read MAQE…SNSA, EESL…PIKR, and AHTL…LPID. 2 stretches are compositionally biased toward low complexity: residues 152 to 164 and 172 to 184; these read SPSL…SSGL and PTRR…SQSP. A compositionally biased stretch (polar residues) spans 258–269; it reads STGSPVSLSDSR.

It belongs to the FAM122 family.

The protein resides in the nucleus. Its subcellular location is the cytoplasm. Its function is as follows. Acts as an inhibitor of serine/threonine-protein phosphatase 2A (PP2A) activity. Potentiates ubiquitin-mediated proteasomal degradation of serine/threonine-protein phosphatase 2A catalytic subunit alpha (PPP2CA). Inhibits PP2A-mediated dephosphorylation of WEE1, promoting ubiquitin-mediated proteolysis of WEE1, thereby releasing G2/M checkpoint. The chain is P2R1A-PPP2R2A-interacting phosphatase regulator 1 from Gallus gallus (Chicken).